A 309-amino-acid chain; its full sequence is Glutaminase (309 aa).

Serine 64, asparagine 114, glutamate 160, asparagine 167, tyrosine 191, tyrosine 243, and valine 261 together coordinate substrate.

Belongs to the glutaminase family. Homotetramer.

The catalysed reaction is L-glutamine + H2O = L-glutamate + NH4(+). In Methylorubrum populi (strain ATCC BAA-705 / NCIMB 13946 / BJ001) (Methylobacterium populi), this protein is Glutaminase.